The sequence spans 456 residues: Probable glycine dehydrogenase (decarboxylating) subunit 1 (456 aa).

This sequence belongs to the GcvP family. N-terminal subunit subfamily. As to quaternary structure, the glycine cleavage system is composed of four proteins: P, T, L and H. In this organism, the P 'protein' is a heterodimer of two subunits.

It carries out the reaction N(6)-[(R)-lipoyl]-L-lysyl-[glycine-cleavage complex H protein] + glycine + H(+) = N(6)-[(R)-S(8)-aminomethyldihydrolipoyl]-L-lysyl-[glycine-cleavage complex H protein] + CO2. The glycine cleavage system catalyzes the degradation of glycine. The P protein binds the alpha-amino group of glycine through its pyridoxal phosphate cofactor; CO(2) is released and the remaining methylamine moiety is then transferred to the lipoamide cofactor of the H protein. This is Probable glycine dehydrogenase (decarboxylating) subunit 1 from Legionella pneumophila (strain Corby).